The chain runs to 302 residues: NAD kinase 2 (302 aa).

The active-site Proton acceptor is the D78. Residues 78-79, 152-153, D182, 193-198, and A217 each bind NAD(+); these read DG, NE, and TAYALS.

The protein belongs to the NAD kinase family. A divalent metal cation is required as a cofactor.

The protein localises to the cytoplasm. The enzyme catalyses NAD(+) + ATP = ADP + NADP(+) + H(+). Involved in the regulation of the intracellular balance of NAD and NADP, and is a key enzyme in the biosynthesis of NADP. Catalyzes specifically the phosphorylation on 2'-hydroxyl of the adenosine moiety of NAD to yield NADP. The sequence is that of NAD kinase 2 from Prochlorococcus marinus (strain MIT 9313).